Here is a 320-residue protein sequence, read N- to C-terminus: Flavonol 4'-sulfotransferase (320 aa).

Residue 69 to 74 (KSGTTW) coordinates 3'-phosphoadenylyl sulfate. Catalysis depends on histidine 129, which acts as the Proton acceptor. Residues arginine 151, serine 159, tyrosine 217, and 285-287 (RKA) each bind 3'-phosphoadenylyl sulfate.

This sequence belongs to the sulfotransferase 1 family. In terms of tissue distribution, highest in shoot tips and lowest in mature leaves and roots.

The protein localises to the cytoplasm. The enzyme catalyses quercetin 3-sulfate + 3'-phosphoadenylyl sulfate = quercetin 3,4'-bissulfate + adenosine 3',5'-bisphosphate + H(+). No requirement for divalent cations and insensitive to p-chloromercuribenzoate, iodoacetate, or iodoacetamide. In terms of biological role, sulfotransferase that utilizes 3'-phospho-5'-adenylyl sulfate (PAPS) as sulfonate donor to catalyze the sulfate conjugation of quercetin 3-sulfate &gt; kaempferol 3-sulfate &gt; isorhamnetin 3-sulfate &gt; patuletin 3-sulfate, but not tamarixetin 3-sulfate. O-sulfation of position 4' of flavonol. May play a role in auxin transport. This is Flavonol 4'-sulfotransferase from Flaveria chlorifolia (Clasping yellowtops).